Here is a 263-residue protein sequence, read N- to C-terminus: Putative S-adenosyl-L-methionine-dependent methyltransferase Mjls_0079 (263 aa).

S-adenosyl-L-methionine contacts are provided by residues Asp121 and 150 to 151 (ES).

Belongs to the UPF0677 family.

Functionally, exhibits S-adenosyl-L-methionine-dependent methyltransferase activity. This chain is Putative S-adenosyl-L-methionine-dependent methyltransferase Mjls_0079, found in Mycobacterium sp. (strain JLS).